The sequence spans 121 residues: Spermidine export protein MdtJ (121 aa).

Helical transmembrane passes span 1-21 (MYIY…GTLS), 32-52 (GGFI…SFAV), 55-75 (IALG…ITLF), and 82-102 (ESLS…IVLI).

It belongs to the drug/metabolite transporter (DMT) superfamily. Small multidrug resistance (SMR) (TC 2.A.7.1) family. MdtJ subfamily. As to quaternary structure, forms a complex with MdtI.

Its subcellular location is the cell inner membrane. Catalyzes the excretion of spermidine. In Escherichia coli O139:H28 (strain E24377A / ETEC), this protein is Spermidine export protein MdtJ.